Here is a 291-residue protein sequence, read N- to C-terminus: tRNA U34 carboxymethyltransferase (291 aa).

Carboxy-S-adenosyl-L-methionine-binding positions include Lys-61, Trp-75, Lys-80, Gly-100, 122-124 (DPS), 149-150 (VE), Tyr-169, and Arg-284.

Belongs to the class I-like SAM-binding methyltransferase superfamily. CmoB family. As to quaternary structure, homotetramer.

The catalysed reaction is carboxy-S-adenosyl-L-methionine + 5-hydroxyuridine(34) in tRNA = 5-carboxymethoxyuridine(34) in tRNA + S-adenosyl-L-homocysteine + H(+). Functionally, catalyzes carboxymethyl transfer from carboxy-S-adenosyl-L-methionine (Cx-SAM) to 5-hydroxyuridine (ho5U) to form 5-carboxymethoxyuridine (cmo5U) at position 34 in tRNAs. The polypeptide is tRNA U34 carboxymethyltransferase (Campylobacter jejuni subsp. doylei (strain ATCC BAA-1458 / RM4099 / 269.97)).